The primary structure comprises 1290 residues: 1-phosphatidylinositol 4,5-bisphosphate phosphodiesterase gamma-1 (1290 aa).

Ala-2 carries the post-translational modification N-acetylalanine. The PH 1 domain occupies 27-142; it reads RSLEVGTVMT…WIKGLTWLME (116 aa). The region spanning 152-187 is the EF-hand domain; that stretch reads QIERWLRKQFYSVDRNREDRISAKDLKNMLSQVNYR. Asp-165, Asn-167, Glu-169, Arg-171, and Asp-176 together coordinate Ca(2+). The region spanning 320-464 is the PI-PLC X-box domain; that stretch reads DTMNNPLSHY…LKRKILIKHK (145 aa). Active-site residues include His-335 and His-380. In terms of domain architecture, PH 2; first part spans 489–523; that stretch reads SIKNGILYLEDPVNHEWYPHYFVLTSSKIYYSEET. The residue at position 506 (Tyr-506) is a Phosphotyrosine. A disordered region spans residues 522–544; the sequence is ETSSDQGNEDEEEPKEVSSSTEL. SH2 domains lie at 550–657 and 668–756; these read WFHG…SEPV and WYHA…RYPI. Residue Tyr-771 is modified to Phosphotyrosine; by SYK. At Tyr-775 the chain carries Phosphotyrosine. Phosphotyrosine; by ITK, SYK and TXK is present on Tyr-783. Residues 791–851 form the SH3 domain; it reads TFKCAVKALF…PSNYVEEMVN (61 aa). Residues 895 to 931 enclose the PH 2; second part domain; that stretch reads FVFSISMASVAHWSLDVAADSQEELQDWVKKIREVAQ. Residues 953-1070 form the PI-PLC Y-box domain; it reads LSELVVYCRP…GYVLQPSTMR (118 aa). Tyr-977 carries the post-translational modification Phosphotyrosine. Residues 1071-1194 form the C2 domain; that stretch reads DEAFDPFDKS…TGYRAVPLKN (124 aa). Ser-1221, Pro-1222, Ser-1227, Ser-1233, and Ser-1248 each carry phosphoserine. The residue at position 1253 (Tyr-1253) is a Phosphotyrosine. Residue Ser-1263 is modified to Phosphoserine. Residues 1271–1290 are disordered; that stretch reads FDSRERRAPRRTRVNGDNRL.

Interacts with AGAP2 via its SH3 domain. Interacts (via SH2 domain) with RET. Interacts with FLT1 (tyrosine-phosphorylated). Interacts (via SH2 domain) with FGFR1, FGFR2, FGFR3 and FGFR4 (phosphorylated). Interacts with LAT (phosphorylated) upon TCR activation. Interacts (via SH3 domain) with the Pro-rich domain of TNK1. Associates with BLNK, VAV1, GRB2 and NCK1 in a B-cell antigen receptor-dependent fashion. Interacts with CBLB in activated T-cells; which inhibits phosphorylation. Interacts with SHB. Interacts (via SH3 domain) with the Arg/Gly-rich-flanked Pro-rich domains of KHDRBS1/SAM68. This interaction is selectively regulated by arginine methylation of KHDRBS1/SAM68. Interacts with INPP5D/SHIP1, THEMIS and CLNK. Interacts with AXL, FLT4 and KIT. Interacts with RALGPS1. Interacts (via the SH2 domains) with VIL1 (phosphorylated at C-terminus tyrosine phosphorylation sites). Interacts (via SH2 domain) with PDGFRA and PDGFRB (tyrosine phosphorylated). Interacts with PIP5K1C. Interacts with NTRK1 and NTRK2 (phosphorylated upon ligand-binding). Interacts with SYK; activates PLCG1. Interacts with GRB2, LAT and THEMIS upon TCR activation in thymocytes. Interacts with TESPA1; the association is increased with prolonged stimulation of the TCR and may facilitate the assembly of the LAT signalosome. Interacts (via C-terminal proline-rich domain (PRD)) with PLCG1 (via SH3 domain); this interaction leads to guanine nucleotide exchange from PlCG1 to DNM1 and enhances DNM1-dependent endocytosis. In terms of assembly, (Microbial infection) Interacts (via SH3 domain) with HEV ORF3 protein. Ca(2+) is required as a cofactor. Post-translationally, tyrosine phosphorylated in response to signaling via activated FLT3, KIT and PDGFRA. Tyrosine phosphorylated by activated FGFR1, FGFR2, FGFR3 and FGFR4. Tyrosine phosphorylated by activated FLT1 and KDR. Tyrosine phosphorylated by activated PDGFRB. The receptor-mediated activation of PLCG1 involves its phosphorylation by tyrosine kinases, in response to ligation of a variety of growth factor receptors and immune system receptors. For instance, SYK phosphorylates and activates PLCG1 in response to ligation of the B-cell receptor. May be dephosphorylated by PTPRJ. Phosphorylated by ITK and TXK on Tyr-783 upon TCR activation in T-cells. Ubiquitinated by CBLB in activated T-cells.

It localises to the cell projection. The protein localises to the lamellipodium. Its subcellular location is the ruffle. It catalyses the reaction a 1,2-diacyl-sn-glycero-3-phospho-(1D-myo-inositol-4,5-bisphosphate) + H2O = 1D-myo-inositol 1,4,5-trisphosphate + a 1,2-diacyl-sn-glycerol + H(+). The enzyme catalyses a 1,2-diacyl-sn-glycero-3-phospho-(1D-myo-inositol) + H2O = 1D-myo-inositol 1-phosphate + a 1,2-diacyl-sn-glycerol + H(+). Activated by phosphorylation on tyrosine residues. In terms of biological role, mediates the production of the second messenger molecules diacylglycerol (DAG) and inositol 1,4,5-trisphosphate (IP3). Plays an important role in the regulation of intracellular signaling cascades. Becomes activated in response to ligand-mediated activation of receptor-type tyrosine kinases, such as PDGFRA, PDGFRB, EGFR, FGFR1, FGFR2, FGFR3 and FGFR4. Plays a role in actin reorganization and cell migration. Guanine nucleotide exchange factor that binds the GTPase DNM1 and catalyzes the dissociation of GDP, allowing a GTP molecule to bind in its place, therefore enhancing DNM1-dependent endocytosis. This chain is 1-phosphatidylinositol 4,5-bisphosphate phosphodiesterase gamma-1, found in Homo sapiens (Human).